The sequence spans 75 residues: CLAVATA3/ESR (CLE)-related protein 33 (75 aa).

Residues 1 to 22 (MASWRMLCFVLLFTSILICHDA) form the signal peptide. Residues proline 67 and proline 70 each carry the hydroxyproline modification. A glycan (O-linked (Ara...) hydroxyproline) is linked at proline 70.

It belongs to the CLV3/ESR signal peptide family. The O-glycosylation (arabinosylation) of the hydroxyproline Pro-70 enhances binding affinity of the CLE33p peptide for its receptor. In terms of tissue distribution, expressed in root vasculature.

The protein localises to the secreted. Its subcellular location is the extracellular space. In terms of biological role, signaling peptide involved in the regulation of root colonization by arbuscular mycorrhizal (AM) fungi. Moves from root to shoot to function with the receptor kinase SUNN, in a signaling pathway that repress strigolactone biosynthetic genes and strigolactone content in the roots, and consequently reduces the promotion of further colonization by AM fungi. This chain is CLAVATA3/ESR (CLE)-related protein 33, found in Medicago truncatula (Barrel medic).